Reading from the N-terminus, the 102-residue chain is MDNQNIRIRLKAYDHRVLDNSTKEIVNTAKRTGARVRGPIPLPTHIEKFTVNRSPHVDKKSREQFEIRTHRRLLDIVEPTPQTVDALMKLDLAAGVDVEIKL.

Belongs to the universal ribosomal protein uS10 family. Part of the 30S ribosomal subunit.

Involved in the binding of tRNA to the ribosomes. This is Small ribosomal subunit protein uS10 from Gluconacetobacter diazotrophicus (strain ATCC 49037 / DSM 5601 / CCUG 37298 / CIP 103539 / LMG 7603 / PAl5).